A 202-amino-acid chain; its full sequence is Imidazoleglycerol-phosphate dehydratase (202 aa).

The protein belongs to the imidazoleglycerol-phosphate dehydratase family.

It is found in the cytoplasm. The catalysed reaction is D-erythro-1-(imidazol-4-yl)glycerol 3-phosphate = 3-(imidazol-4-yl)-2-oxopropyl phosphate + H2O. The protein operates within amino-acid biosynthesis; L-histidine biosynthesis; L-histidine from 5-phospho-alpha-D-ribose 1-diphosphate: step 6/9. This chain is Imidazoleglycerol-phosphate dehydratase, found in Sinorhizobium medicae (strain WSM419) (Ensifer medicae).